Here is a 256-residue protein sequence, read N- to C-terminus: MAQREEAGPSSVDPEDVARFDRIGEDWWSADGPMAALHKLNPVRVAYLRDLMSRHFRVEGLPRDRYAPRPLEGLRILDAGCGAGLLAEPLARLGARVTAIDPAPRNIEVARRHAEKSGLSIDYRMTTIEALSGEAATFDAVLAMEVLEHVLDVAGFVRCCGALVRPGGLMFAATLNRTLKSFAFAIVGAEYVLGWAPRGTHDWRRFISPRELARAMAAADLSAFDETGVVFDPLQGGWRLAHDTDINYMMAASKRR.

Residues R44, G80, D101, and M144 each coordinate S-adenosyl-L-methionine.

Belongs to the methyltransferase superfamily. UbiG/COQ3 family.

The catalysed reaction is a 3-demethylubiquinol + S-adenosyl-L-methionine = a ubiquinol + S-adenosyl-L-homocysteine + H(+). It carries out the reaction a 3-(all-trans-polyprenyl)benzene-1,2-diol + S-adenosyl-L-methionine = a 2-methoxy-6-(all-trans-polyprenyl)phenol + S-adenosyl-L-homocysteine + H(+). Its pathway is cofactor biosynthesis; ubiquinone biosynthesis. Functionally, O-methyltransferase that catalyzes the 2 O-methylation steps in the ubiquinone biosynthetic pathway. The sequence is that of Ubiquinone biosynthesis O-methyltransferase from Methylocella silvestris (strain DSM 15510 / CIP 108128 / LMG 27833 / NCIMB 13906 / BL2).